Reading from the N-terminus, the 475-residue chain is Ribulose bisphosphate carboxylase large chain (475 aa).

Residues 1–2 (MS) constitute a propeptide that is removed on maturation. Residue Pro-3 is modified to N-acetylproline. Lys-14 is modified (N6,N6,N6-trimethyllysine). Residues Asn-123 and Thr-173 each coordinate substrate. The active-site Proton acceptor is the Lys-175. A substrate-binding site is contributed by Lys-177. Residues Lys-201, Asp-203, and Glu-204 each coordinate Mg(2+). Position 201 is an N6-carboxylysine (Lys-201). His-294 serves as the catalytic Proton acceptor. Residues Arg-295, His-327, and Ser-379 each contribute to the substrate site.

It belongs to the RuBisCO large chain family. Type I subfamily. As to quaternary structure, heterohexadecamer of 8 large chains and 8 small chains; disulfide-linked. The disulfide link is formed within the large subunit homodimers. It depends on Mg(2+) as a cofactor. Post-translationally, the disulfide bond which can form in the large chain dimeric partners within the hexadecamer appears to be associated with oxidative stress and protein turnover.

The protein resides in the plastid. It is found in the chloroplast. It catalyses the reaction 2 (2R)-3-phosphoglycerate + 2 H(+) = D-ribulose 1,5-bisphosphate + CO2 + H2O. The enzyme catalyses D-ribulose 1,5-bisphosphate + O2 = 2-phosphoglycolate + (2R)-3-phosphoglycerate + 2 H(+). RuBisCO catalyzes two reactions: the carboxylation of D-ribulose 1,5-bisphosphate, the primary event in carbon dioxide fixation, as well as the oxidative fragmentation of the pentose substrate in the photorespiration process. Both reactions occur simultaneously and in competition at the same active site. The polypeptide is Ribulose bisphosphate carboxylase large chain (Pinus balfouriana (Foxtail pine)).